We begin with the raw amino-acid sequence, 503 residues long: Xylan O-acetyltransferase 12 (503 aa).

At 1–54 (MWSALFSHLREVHKRSGVKEEKLIMKSPAAAGEAAGCHKPQATATNKMTVLQSP) the chain is on the cytoplasmic side. A helical; Signal-anchor for type II membrane protein transmembrane segment spans residues 55–77 (LGLRTILTSLVAFFIVVSSVSLL). At 78–503 (FDRSQDAQAQ…EFLYAYLMHK (426 aa)) the chain is on the lumenal side. Disulfide bonds link cysteine 153–cysteine 204, cysteine 175–cysteine 240, cysteine 184–cysteine 484, and cysteine 400–cysteine 480. Asparagine 154, asparagine 164, asparagine 190, and asparagine 210 each carry an N-linked (GlcNAc...) asparagine glycan. Positions 227 to 229 (GDS) match the GDS motif motif. The active-site Nucleophile is serine 229. Residues asparagine 256, asparagine 268, asparagine 373, asparagine 402, and asparagine 443 are each glycosylated (N-linked (GlcNAc...) asparagine). The active-site Proton donor is the aspartate 479. A DXXH motif motif is present at residues 479-482 (DCTH). Histidine 482 serves as the catalytic Proton acceptor.

It belongs to the PC-esterase family. TBL subfamily.

It localises to the golgi apparatus membrane. Its function is as follows. Xylan acetyltransferase required for 2-O- and 3-O-monoacetylation of xylosyl residues in xylan. Catalyzes the 2-O-acetylation of xylan, followed by nonenzymatic acetyl migration to the O-3 position, resulting in products that are monoacetylated at both O-2 and O-3 positions. This Oryza sativa subsp. japonica (Rice) protein is Xylan O-acetyltransferase 12.